The following is a 122-amino-acid chain: MGREMKKTGTPRPFRIEDPNQQPTWHDQPEMGSHYFAQAGLELLGSSNPPASASQSAGITGVSHCARPGEHDLNHTVFQVKDSTFLRHLESDRPEFKSCLPPHFTEPSVSLSTSEGCEDAMG.

2 disordered regions span residues 1–30 and 96–122; these read MGRE…DQPE and FKSC…DAMG.

This is an uncharacterized protein from Homo sapiens (Human).